Reading from the N-terminus, the 508-residue chain is Lysine--tRNA ligase (508 aa).

Residues Glu-418 and Glu-425 each contribute to the Mg(2+) site.

The protein belongs to the class-II aminoacyl-tRNA synthetase family. As to quaternary structure, homodimer. Requires Mg(2+) as cofactor.

It is found in the cytoplasm. The catalysed reaction is tRNA(Lys) + L-lysine + ATP = L-lysyl-tRNA(Lys) + AMP + diphosphate. This chain is Lysine--tRNA ligase, found in Burkholderia pseudomallei (strain 1710b).